A 721-amino-acid polypeptide reads, in one-letter code: Dipeptidyl-peptidase 7 (721 aa).

Residues 1–21 form the signal peptide; sequence MKKFKLLLLALMCVAFLPSKA. Residues H87, D228, and S656 each act as charge relay system in the active site.

It belongs to the peptidase S46 family.

Catalyzes the removal of dipeptides from the N-terminus of oligopeptides. Most potently cleaves the synthetic substrate Met-Leu-methylcoumaryl-7-amide (Met-Leu-MCA), followed by Leu-Arg-MCA, while this enzyme does not hydrolyze Gly-Arg-, Gly-Gly-, Lys-Lys-, or Gly-Pro-MCA. This is Dipeptidyl-peptidase 7 (dpp7) from Phocaeicola vulgatus (strain ATCC 8482 / DSM 1447 / JCM 5826 / CCUG 4940 / NBRC 14291 / NCTC 11154) (Bacteroides vulgatus).